The chain runs to 288 residues: Diaminopimelate epimerase (288 aa).

Substrate contacts are provided by Asn-13, Gln-46, and Asn-66. The active-site Proton donor is Cys-75. Residues 76–77 (GN), Asn-166, Asn-199, and 217–218 (ER) contribute to the substrate site. Catalysis depends on Cys-226, which acts as the Proton acceptor. 227–228 (GT) lines the substrate pocket.

Belongs to the diaminopimelate epimerase family. Homodimer.

Its subcellular location is the cytoplasm. It catalyses the reaction (2S,6S)-2,6-diaminopimelate = meso-2,6-diaminopimelate. The protein operates within amino-acid biosynthesis; L-lysine biosynthesis via DAP pathway; DL-2,6-diaminopimelate from LL-2,6-diaminopimelate: step 1/1. Its function is as follows. Catalyzes the stereoinversion of LL-2,6-diaminopimelate (L,L-DAP) to meso-diaminopimelate (meso-DAP), a precursor of L-lysine and an essential component of the bacterial peptidoglycan. This Cupriavidus necator (strain ATCC 17699 / DSM 428 / KCTC 22496 / NCIMB 10442 / H16 / Stanier 337) (Ralstonia eutropha) protein is Diaminopimelate epimerase.